The primary structure comprises 418 residues: Pigment epithelium-derived factor (418 aa).

A signal peptide spans 1–19 (MQALVLLLCIGALLGHSSC). Position 20 is a pyrrolidone carboxylic acid (glutamine 20). The disordered stretch occupies residues 20 to 39 (QNPASPPEEGSPDPDSTGAL). Phosphoserine; by CK2 occurs at positions 24 and 114. The residue at position 227 (serine 227) is a Phosphoserine; by PKA. A glycan (N-linked (GlcNAc...) (complex) asparagine) is linked at asparagine 285. The segment at 371–383 (TTPSPGLQPAHLT) is O-glycosylated at one site.

It belongs to the serpin family. In terms of assembly, interacts with PNPLA2; this interaction stimulates the phospholipase A2 activity of PNPLA2. In terms of processing, the N-terminus is blocked. Extracellular phosphorylation enhances antiangiogenic activity. Post-translationally, N- and O-glycosylated. O-glycosylated with a core 1 or possibly core 8 glycan. Retinal pigment epithelial cells and blood plasma.

The protein localises to the secreted. It is found in the melanosome. Its function is as follows. Neurotrophic protein; induces extensive neuronal differentiation in retinoblastoma cells. Potent inhibitor of angiogenesis. As it does not undergo the S (stressed) to R (relaxed) conformational transition characteristic of active serpins, it exhibits no serine protease inhibitory activity. The sequence is that of Pigment epithelium-derived factor (SERPINF1) from Homo sapiens (Human).